The sequence spans 290 residues: Small ribosomal subunit protein uS2 (290 aa).

Residues 269-290 form a disordered region; it reads WEAEASGDWAAESAQPNPETKW.

Belongs to the universal ribosomal protein uS2 family. In terms of assembly, component of the small ribosomal subunit. Mature ribosomes consist of a small (40S) and a large (60S) subunit. The 40S subunit contains about 33 different proteins and 1 molecule of RNA (18S). The 60S subunit contains about 49 different proteins and 3 molecules of RNA (25S, 5.8S and 5S). Interacts with rps21.

The protein localises to the cytoplasm. Required for the assembly and/or stability of the 40S ribosomal subunit. Required for the processing of the 20S rRNA-precursor to mature 18S rRNA in a late step of the maturation of 40S ribosomal subunits. The protein is Small ribosomal subunit protein uS2 (rps0) of Talaromyces marneffei (strain ATCC 18224 / CBS 334.59 / QM 7333) (Penicillium marneffei).